Reading from the N-terminus, the 195-residue chain is Calcineurin B homologous protein 1 (195 aa).

A lipid anchor (N-myristoyl glycine) is attached at Gly2. EF-hand domains are found at residues 26–61 (SQITRLYSRFTSLDKGENGTLSREDFQRIPELAINP), 66–101 (IINAFFSEGEDQVNFRGFMRTLAHFRPIEDNEKSKD), 110–145 (SRSNKLHFAFRLYDLDKDDKISRDELLQVLRMMVGV), and 151–186 (QLGSIADRTIQEADQDGDCAISFAEFVKVLEKVDVE). Asp123, Asp125, Asp127, Lys129, Glu134, Asp164, Asp166, Asp168, and Glu175 together coordinate Ca(2+).

Belongs to the calcineurin regulatory subunit family. CHP subfamily. As to quaternary structure, monomer. Phosphorylated. In terms of processing, calcium-binding or N-myristoylation are necessary for the Na(+)/H(+) exchange activities.

The protein resides in the nucleus. It is found in the cytoplasm. Its subcellular location is the cytoskeleton. The protein localises to the endomembrane system. It localises to the endoplasmic reticulum-Golgi intermediate compartment. The protein resides in the endoplasmic reticulum. It is found in the cell membrane. Its subcellular location is the membrane. Functionally, calcium-binding protein involved in different processes such as regulation of vesicular trafficking, plasma membrane Na(+)/H(+) exchanger and gene transcription. Involved in the constitutive exocytic membrane traffic. Mediates the association between microtubules and membrane-bound organelles of the endoplasmic reticulum and Golgi apparatus and is also required for the targeting and fusion of transcytotic vesicles (TCV) with the plasma membrane. Functions as an integral cofactor in cell pH regulation by controlling plasma membrane-type Na(+)/H(+) exchange activity. Inhibits serum- and GTPase-stimulated Na(+)/H(+) exchange. Plays a role as an inhibitor of ribosomal RNA transcription. Acts as a negative regulator of the calcineurin/NFAT signaling pathway. This is Calcineurin B homologous protein 1 (CHP1) from Gallus gallus (Chicken).